Reading from the N-terminus, the 416-residue chain is Tryptophan synthase beta chain (416 aa).

K109 carries the post-translational modification N6-(pyridoxal phosphate)lysine.

This sequence belongs to the TrpB family. As to quaternary structure, tetramer of two alpha and two beta chains. It depends on pyridoxal 5'-phosphate as a cofactor.

It carries out the reaction (1S,2R)-1-C-(indol-3-yl)glycerol 3-phosphate + L-serine = D-glyceraldehyde 3-phosphate + L-tryptophan + H2O. Its pathway is amino-acid biosynthesis; L-tryptophan biosynthesis; L-tryptophan from chorismate: step 5/5. Its function is as follows. The beta subunit is responsible for the synthesis of L-tryptophan from indole and L-serine. The sequence is that of Tryptophan synthase beta chain from Synechococcus sp. (strain WH7803).